Consider the following 752-residue polypeptide: Photosystem I P700 chlorophyll a apoprotein A1 (752 aa).

8 helical membrane-spanning segments follow: residues Ile-73 to Ala-96, Leu-159 to His-182, Met-198 to Ile-222, Thr-294 to Tyr-312, Trp-349 to Tyr-372, Leu-388 to Val-414, Ala-436 to His-458, and Phe-533 to Val-551. [4Fe-4S] cluster-binding residues include Cys-575 and Cys-584. Helical transmembrane passes span His-591–Trp-612 and Leu-666–Phe-688. His-677 is a chlorophyll a' binding site. Residues Met-685 and Tyr-693 each coordinate chlorophyll a. Trp-694 contacts phylloquinone. The chain crosses the membrane as a helical span at residues Ala-726–Ala-746.

This sequence belongs to the PsaA/PsaB family. In terms of assembly, the PsaA/B heterodimer binds the P700 chlorophyll special pair and subsequent electron acceptors. PSI consists of a core antenna complex that captures photons, and an electron transfer chain that converts photonic excitation into a charge separation. The eukaryotic PSI reaction center is composed of at least 11 subunits. P700 is a chlorophyll a/chlorophyll a' dimer, A0 is one or more chlorophyll a, A1 is one or both phylloquinones and FX is a shared 4Fe-4S iron-sulfur center. serves as cofactor.

It is found in the plastid. The protein resides in the chloroplast thylakoid membrane. It catalyses the reaction reduced [plastocyanin] + hnu + oxidized [2Fe-2S]-[ferredoxin] = oxidized [plastocyanin] + reduced [2Fe-2S]-[ferredoxin]. PsaA and PsaB bind P700, the primary electron donor of photosystem I (PSI), as well as the electron acceptors A0, A1 and FX. PSI is a plastocyanin/cytochrome c6-ferredoxin oxidoreductase, converting photonic excitation into a charge separation, which transfers an electron from the donor P700 chlorophyll pair to the spectroscopically characterized acceptors A0, A1, FX, FA and FB in turn. Oxidized P700 is reduced on the lumenal side of the thylakoid membrane by plastocyanin or cytochrome c6. This Gracilaria tenuistipitata var. liui (Red alga) protein is Photosystem I P700 chlorophyll a apoprotein A1.